The chain runs to 248 residues: 2,3-bisphosphoglycerate-dependent phosphoglycerate mutase 2 (248 aa).

Substrate contacts are provided by residues 8-15 (RHGESAWN), 21-22 (TG), R60, 87-90 (EKHY), K98, 114-115 (RR), and 183-184 (GN). The Tele-phosphohistidine intermediate role is filled by H9. E87 acts as the Proton donor/acceptor in catalysis.

The protein belongs to the phosphoglycerate mutase family. BPG-dependent PGAM subfamily.

The catalysed reaction is (2R)-2-phosphoglycerate = (2R)-3-phosphoglycerate. The protein operates within carbohydrate degradation; glycolysis; pyruvate from D-glyceraldehyde 3-phosphate: step 3/5. In terms of biological role, catalyzes the interconversion of 2-phosphoglycerate and 3-phosphoglycerate. This chain is 2,3-bisphosphoglycerate-dependent phosphoglycerate mutase 2, found in Bacteroides thetaiotaomicron (strain ATCC 29148 / DSM 2079 / JCM 5827 / CCUG 10774 / NCTC 10582 / VPI-5482 / E50).